A 694-amino-acid polypeptide reads, in one-letter code: Methionine--tRNA ligase (694 aa).

The short motif at 12-22 is the 'HIGH' region element; the sequence is PYANGPLHLGH. Cys143, Cys146, Cys156, and Cys159 together coordinate Zn(2+). The 'KMSKS' region motif lies at 330 to 334; sequence KMSKS. Residue Lys333 coordinates ATP. Positions 550–575 are enriched in low complexity; it reads LAAPAAPATTSKAAPAKPDTKPAAAA. Residues 550 to 580 form a disordered region; the sequence is LAAPAAPATTSKAAPAKPDTKPAAAANPQSP. The region spanning 591-694 is the tRNA-binding domain; that stretch reads DFAKLDLRIG…SGAQPGMPVR (104 aa).

This sequence belongs to the class-I aminoacyl-tRNA synthetase family. MetG type 1 subfamily. Homodimer. Zn(2+) serves as cofactor.

It is found in the cytoplasm. It catalyses the reaction tRNA(Met) + L-methionine + ATP = L-methionyl-tRNA(Met) + AMP + diphosphate. Functionally, is required not only for elongation of protein synthesis but also for the initiation of all mRNA translation through initiator tRNA(fMet) aminoacylation. This is Methionine--tRNA ligase from Xanthomonas oryzae pv. oryzae (strain MAFF 311018).